We begin with the raw amino-acid sequence, 394 residues long: Benzoate membrane transport protein (394 aa).

11 helical membrane-spanning segments follow: residues 16 to 36 (ATIAGFLAVLISYSGPLIIFF), 49 to 69 (MISWIWAISIGAAVTGIFLSI), 74 to 94 (PVVTAWSAPGTALLVTLFPNI), 99 to 119 (AVAAYITAAIVIFLVGITGYF), 139 to 161 (LFQFGLGLFLATDTLPLIVFSML), 176 to 196 (MLWVLICGVAFSFFLGKMNPV), 220 to 240 (LALPLILVSLTGQFLPGMAIL), 252 to 272 (IIAAASLASLFAAFAGGITIV), 301 to 321 (GLFYVLGGVFAGSIVALFSLL), 325 to 345 (LVAALAGLALLGAIASNIKIA), and 368 to 388 (FLGLSSVFWGMCIGMLAYFIL).

It localises to the cell membrane. Its function is as follows. Probably involved in the transport of benzoate. The chain is Benzoate membrane transport protein (benE) from Acinetobacter baylyi (strain ATCC 33305 / BD413 / ADP1).